The chain runs to 698 residues: Elongation factor G (698 aa).

Residues 10–285 (AATRNIGIMA…AVVDFLPSPT (276 aa)) enclose the tr-type G domain. Residues 19–26 (AHIDAGKT), 83–87 (DTPGH), and 137–140 (NKMD) each bind GTP.

Belongs to the TRAFAC class translation factor GTPase superfamily. Classic translation factor GTPase family. EF-G/EF-2 subfamily.

Its subcellular location is the cytoplasm. Its function is as follows. Catalyzes the GTP-dependent ribosomal translocation step during translation elongation. During this step, the ribosome changes from the pre-translocational (PRE) to the post-translocational (POST) state as the newly formed A-site-bound peptidyl-tRNA and P-site-bound deacylated tRNA move to the P and E sites, respectively. Catalyzes the coordinated movement of the two tRNA molecules, the mRNA and conformational changes in the ribosome. The chain is Elongation factor G from Parafrankia sp. (strain EAN1pec).